The primary structure comprises 249 residues: 5'-nucleotidase SurE (249 aa).

A divalent metal cation is bound by residues aspartate 9, aspartate 10, serine 40, and asparagine 92.

The protein belongs to the SurE nucleotidase family. It depends on a divalent metal cation as a cofactor.

The protein resides in the cytoplasm. The catalysed reaction is a ribonucleoside 5'-phosphate + H2O = a ribonucleoside + phosphate. Its function is as follows. Nucleotidase that shows phosphatase activity on nucleoside 5'-monophosphates. The sequence is that of 5'-nucleotidase SurE from Shewanella putrefaciens (strain CN-32 / ATCC BAA-453).